Reading from the N-terminus, the 436-residue chain is ATP-dependent protease ATPase subunit HslU (436 aa).

Residues Ile-18, 60-65 (GVGKTE), Asp-249, Glu-314, and Arg-386 each bind ATP.

This sequence belongs to the ClpX chaperone family. HslU subfamily. A double ring-shaped homohexamer of HslV is capped on each side by a ring-shaped HslU homohexamer. The assembly of the HslU/HslV complex is dependent on binding of ATP.

The protein resides in the cytoplasm. In terms of biological role, ATPase subunit of a proteasome-like degradation complex; this subunit has chaperone activity. The binding of ATP and its subsequent hydrolysis by HslU are essential for unfolding of protein substrates subsequently hydrolyzed by HslV. HslU recognizes the N-terminal part of its protein substrates and unfolds these before they are guided to HslV for hydrolysis. The sequence is that of ATP-dependent protease ATPase subunit HslU from Chelativorans sp. (strain BNC1).